The primary structure comprises 260 residues: Meiotic recombination protein rec6 (260 aa).

Positions 197-222 are disordered; that stretch reads QYSESSLLDDSQLLCSSPPVDSTEEA. Over residues 199 to 213 the composition is skewed to low complexity; that stretch reads SESSLLDDSQLLCSS.

The protein belongs to the TOP6B-like family. In terms of assembly, component of the DSB catalytic core (DSBC) complex, composed of at least rec12, rec6 and rec14. The complex interacts with mde2.

Its function is as follows. Required for formation of the rec12-mediated double-strand breaks (DSBs) that initiate meiotic recombination. May be involved primarily in the early steps of meiotic recombination. The chain is Meiotic recombination protein rec6 from Schizosaccharomyces pombe (strain 972 / ATCC 24843) (Fission yeast).